We begin with the raw amino-acid sequence, 483 residues long: tRNA sulfurtransferase (483 aa).

Residues 61–165 enclose the THUMP domain; sequence PLVADALTLI…NDRLLLITER (105 aa). ATP is bound by residues 183–184, Lys-265, Gly-287, and Gln-296; that span reads LI. Residues Cys-344 and Cys-457 are joined by a disulfide bond. Residues 405–483 form the Rhodanese domain; that stretch reads LGSGDVVLDI…GFQNVKVYRP (79 aa). The active-site Cysteine persulfide intermediate is Cys-457.

It belongs to the ThiI family.

It localises to the cytoplasm. It carries out the reaction [ThiI sulfur-carrier protein]-S-sulfanyl-L-cysteine + a uridine in tRNA + 2 reduced [2Fe-2S]-[ferredoxin] + ATP + H(+) = [ThiI sulfur-carrier protein]-L-cysteine + a 4-thiouridine in tRNA + 2 oxidized [2Fe-2S]-[ferredoxin] + AMP + diphosphate. The catalysed reaction is [ThiS sulfur-carrier protein]-C-terminal Gly-Gly-AMP + S-sulfanyl-L-cysteinyl-[cysteine desulfurase] + AH2 = [ThiS sulfur-carrier protein]-C-terminal-Gly-aminoethanethioate + L-cysteinyl-[cysteine desulfurase] + A + AMP + 2 H(+). The protein operates within cofactor biosynthesis; thiamine diphosphate biosynthesis. Functionally, catalyzes the ATP-dependent transfer of a sulfur to tRNA to produce 4-thiouridine in position 8 of tRNAs, which functions as a near-UV photosensor. Also catalyzes the transfer of sulfur to the sulfur carrier protein ThiS, forming ThiS-thiocarboxylate. This is a step in the synthesis of thiazole, in the thiamine biosynthesis pathway. The sulfur is donated as persulfide by IscS. This chain is tRNA sulfurtransferase, found in Sodalis glossinidius (strain morsitans).